The chain runs to 686 residues: MGEFKVHRVRFFNYVPSGIRCVAYNNQSNRLAVSRTDGTVEIYNLSANYFQEKFFPGHESRATEALCWAEGQRLFSAGLNGEIMEYDLQALNIKYAMDAFGGPIWSMAASPSGSQLLVGCEDGSVKLFQITPDKIQFERNFDRQKSRILSLSWHPSGTHIAAGSIDYISVFDVKSGSAVHKMIVDRQYMGVSKRKCIVWGVAFLSDGTIISVDSAGKVQFWDSATGTLVKSHLIANADVQSIAVADQEDSFVVGTAEGTVFHFQLVPVTSNSSEKQWVRTKPFQHHTHDVRTVAHSPTALISGGTDTHLVFRPLMEKVEVKNYDAALRKITFPHRCLISCSKKRQLLLFQFAHHLELWRLGSTVATGKNGDTLPLSKNADHLLHLKTKGPENIICSCISPCGSWIAYSTVSRFFLYRLNYEHDNISLKRVSKMPAFLRSALQILFSEDSTKLFVASNQGALHIVQLSGGSFKHLHAFQPQSGTVEAMCLLAVSPDGNWLAASGTSAGVHVYNVKQLKLHCTVPAYNFPVTAMAIAPNTNNLVIAHSDQQVFEYSIPDKQYTDWSRTVQKQGFHHLWLQRDTPITHISFHPKRPMHILLHDAYMFCIIDKSLPLPNDKTLLYNPFPPTNESDVIRRRTAHAFKISKIYKPLLFMDLLDERTLVAVERPLDDIIAQLPPPIKKKKFGT.

WD repeat units lie at residues 7–50, 51–92, 93–135, 136–181, 182–226, 227–275, 276–317, 318–377, 378–427, 428–475, 476–516, 517–566, 567–627, and 628–666; these read HRVR…ANYF, QEKF…QALN, IKYA…PDKI, QFER…AVHK, MIVD…SATG, TLVK…SSEK, QWVR…LMEK, VEVK…PLSK, NADH…NISL, KRVS…KHLH, AFQP…VKQL, KLHC…WSRT, VQKQ…FPPT, and NESD…AVER. Lys-321 is covalently cross-linked (Glycyl lysine isopeptide (Lys-Gly) (interchain with G-Cter in SUMO2)).

In terms of assembly, interacts with HIVEP1 Interacts with NOL11. Part of the small subunit (SSU) processome, composed of more than 70 proteins and the RNA chaperone small nucleolar RNA (snoRNA) U3. May be a component of the proposed t-UTP subcomplex of the ribosomal small subunit (SSU) processome containing at least UTP4, WDR43, HEATR1, UTP15, WDR75. Post-translationally, may be phosphorylated during mitosis; may control the association of this protein with WRD43 and UTP15.

It is found in the nucleus. It localises to the nucleolus. The protein resides in the chromosome. In terms of biological role, ribosome biogenesis factor. Involved in nucleolar processing of pre-18S ribosomal RNA. Part of the small subunit (SSU) processome, first precursor of the small eukaryotic ribosomal subunit. During the assembly of the SSU processome in the nucleolus, many ribosome biogenesis factors, an RNA chaperone and ribosomal proteins associate with the nascent pre-rRNA and work in concert to generate RNA folding, modifications, rearrangements and cleavage as well as targeted d Involved in SSU pre-rRNA processing at sites A', A0, 1 and 2b. Required for optimal pre-ribosomal RNA transcription by RNA polymerase. May be a transcriptional regulator. Functionally, (Microbial infection) Acts as a positive regulator of HIVEP1 which specifically binds to the DNA sequence 5'-GGGACTTTCC-3' found in enhancer elements of numerous viral promoters such as those of HIV-1, SV40, or CMV. The polypeptide is U3 small nucleolar RNA-associated protein 4 homolog (Homo sapiens (Human)).